An 89-amino-acid chain; its full sequence is MTIDKINEIFKENWKNKLTKYEIARIISARALQLSMGALPLIDTSNLKSDDVISIAEEELKRGVLPITIRRIYPNGQVELISVRKIENR.

The protein belongs to the archaeal Rpo6/eukaryotic RPB6 RNA polymerase subunit family. In terms of assembly, part of the 13-subunit RNA polymerase complex.

It is found in the cytoplasm. The enzyme catalyses RNA(n) + a ribonucleoside 5'-triphosphate = RNA(n+1) + diphosphate. In terms of biological role, DNA-dependent RNA polymerase (RNAP) catalyzes the transcription of DNA into RNA using the four ribonucleoside triphosphates as substrates. Its function is as follows. Reconstitution experiments show this subunit is required for basic activity. The polypeptide is DNA-directed RNA polymerase subunit Rpo6 (Sulfolobus acidocaldarius (strain ATCC 33909 / DSM 639 / JCM 8929 / NBRC 15157 / NCIMB 11770)).